The following is a 196-amino-acid chain: NADH-quinone oxidoreductase subunit I (196 aa).

4Fe-4S ferredoxin-type domains lie at 54–84 (LNRW…VEGA) and 104–133 (RVYQ…MTNE). [4Fe-4S] cluster-binding residues include cysteine 64, cysteine 67, cysteine 70, cysteine 74, cysteine 113, cysteine 116, cysteine 119, and cysteine 123.

This sequence belongs to the complex I 23 kDa subunit family. NDH-1 is composed of 14 different subunits. Subunits NuoA, H, J, K, L, M, N constitute the membrane sector of the complex. The cofactor is [4Fe-4S] cluster.

Its subcellular location is the cell membrane. The catalysed reaction is a quinone + NADH + 5 H(+)(in) = a quinol + NAD(+) + 4 H(+)(out). Its function is as follows. NDH-1 shuttles electrons from NADH, via FMN and iron-sulfur (Fe-S) centers, to quinones in the respiratory chain. The immediate electron acceptor for the enzyme in this species is believed to be ubiquinone. Couples the redox reaction to proton translocation (for every two electrons transferred, four hydrogen ions are translocated across the cytoplasmic membrane), and thus conserves the redox energy in a proton gradient. The sequence is that of NADH-quinone oxidoreductase subunit I from Nocardioides sp. (strain ATCC BAA-499 / JS614).